A 612-amino-acid polypeptide reads, in one-letter code: Dihydroxy-acid dehydratase (612 aa).

Aspartate 81 is a Mg(2+) binding site. Cysteine 122 is a binding site for [2Fe-2S] cluster. Mg(2+) contacts are provided by aspartate 123 and lysine 124. Lysine 124 is modified (N6-carboxylysine). [2Fe-2S] cluster is bound at residue cysteine 193. Residue glutamate 489 participates in Mg(2+) binding. Serine 515 serves as the catalytic Proton acceptor.

The protein belongs to the IlvD/Edd family. In terms of assembly, homodimer. The cofactor is [2Fe-2S] cluster. It depends on Mg(2+) as a cofactor.

The catalysed reaction is (2R)-2,3-dihydroxy-3-methylbutanoate = 3-methyl-2-oxobutanoate + H2O. The enzyme catalyses (2R,3R)-2,3-dihydroxy-3-methylpentanoate = (S)-3-methyl-2-oxopentanoate + H2O. Its pathway is amino-acid biosynthesis; L-isoleucine biosynthesis; L-isoleucine from 2-oxobutanoate: step 3/4. The protein operates within amino-acid biosynthesis; L-valine biosynthesis; L-valine from pyruvate: step 3/4. Its function is as follows. Functions in the biosynthesis of branched-chain amino acids. Catalyzes the dehydration of (2R,3R)-2,3-dihydroxy-3-methylpentanoate (2,3-dihydroxy-3-methylvalerate) into 2-oxo-3-methylpentanoate (2-oxo-3-methylvalerate) and of (2R)-2,3-dihydroxy-3-methylbutanoate (2,3-dihydroxyisovalerate) into 2-oxo-3-methylbutanoate (2-oxoisovalerate), the penultimate precursor to L-isoleucine and L-valine, respectively. The polypeptide is Dihydroxy-acid dehydratase (Stenotrophomonas maltophilia (strain R551-3)).